We begin with the raw amino-acid sequence, 217 residues long: 7-cyano-7-deazaguanine synthase (217 aa).

7 to 17 (LSGGMDSTTLL) provides a ligand contact to ATP. Zn(2+) contacts are provided by Cys183, Cys191, Cys194, and Cys197.

Belongs to the QueC family. Zn(2+) is required as a cofactor.

The catalysed reaction is 7-carboxy-7-deazaguanine + NH4(+) + ATP = 7-cyano-7-deazaguanine + ADP + phosphate + H2O + H(+). Its pathway is purine metabolism; 7-cyano-7-deazaguanine biosynthesis. Its function is as follows. Catalyzes the ATP-dependent conversion of 7-carboxy-7-deazaguanine (CDG) to 7-cyano-7-deazaguanine (preQ(0)). The sequence is that of 7-cyano-7-deazaguanine synthase from Methanoregula boonei (strain DSM 21154 / JCM 14090 / 6A8).